A 199-amino-acid polypeptide reads, in one-letter code: Inner membrane protein E199L (199 aa).

Residue Asn-131 is glycosylated (N-linked (GlcNAc...) asparagine; by host). Residues 150 to 170 (INVMNHPFLTLILIILILVII) traverse the membrane as a helical segment.

This sequence belongs to the asfivirus E199L family. In terms of assembly, interacts with host PYCR2; this interaction results in autophagy activation.

The protein resides in the virion membrane. The protein localises to the host membrane. Its function is as follows. Essential for viral fusion with host endosomal membrane and core release. Not required for virus morphogenesis and egress. Induces complete autophagy through the interaction with and down-regulation of host PYCR2. The chain is Inner membrane protein E199L from African swine fever virus (isolate Pig/Kenya/KEN-50/1950) (ASFV).